The chain runs to 245 residues: 3-deoxy-manno-octulosonate cytidylyltransferase (245 aa).

It belongs to the KdsB family.

It localises to the cytoplasm. The enzyme catalyses 3-deoxy-alpha-D-manno-oct-2-ulosonate + CTP = CMP-3-deoxy-beta-D-manno-octulosonate + diphosphate. Its pathway is nucleotide-sugar biosynthesis; CMP-3-deoxy-D-manno-octulosonate biosynthesis; CMP-3-deoxy-D-manno-octulosonate from 3-deoxy-D-manno-octulosonate and CTP: step 1/1. It participates in bacterial outer membrane biogenesis; lipopolysaccharide biosynthesis. Functionally, activates KDO (a required 8-carbon sugar) for incorporation into bacterial lipopolysaccharide in Gram-negative bacteria. This chain is 3-deoxy-manno-octulosonate cytidylyltransferase, found in Acidobacterium capsulatum (strain ATCC 51196 / DSM 11244 / BCRC 80197 / JCM 7670 / NBRC 15755 / NCIMB 13165 / 161).